We begin with the raw amino-acid sequence, 693 residues long: Iron-sulfur clusters transporter atm1, mitochondrial (693 aa).

A mitochondrion-targeting transit peptide spans 1-28 (MLERCPWKLISSPRNIPARSFLNSRGTY). Over 29–118 (LVLRKSNILP…PKGKTNLKVR (90 aa)) the chain is Mitochondrial matrix. Residues 119-140 (VVSALALLVAAKILNVQVPFYF) traverse the membrane as a helical segment. The ABC transmembrane type-1 domain maps to 119-409 (VVSALALLVA…LGSVYREMRQ (291 aa)). Topologically, residues 141–163 (KSIIDTMNTTLVQEVGALWSTVG) are mitochondrial intermembrane. A helical transmembrane segment spans residues 164 to 187 (AVVLGYGFARIFSTVFQELRNSVF). Topologically, residues 188-236 (AIVSQSAIRSVSSNVYQHLLNLDMNFHLSKQTGSITRAMDRGTKGISFI) are mitochondrial matrix. Residues 237–260 (LSSMVLHIIPITLEIAMVSGILTY) traverse the membrane as a helical segment. Lys-261 is a topological domain (mitochondrial intermembrane). The chain crosses the membrane as a helical span at residues 262-282 (YGPSFSAIAATTVALYALFTV). The Mitochondrial matrix segment spans residues 283–348 (RTTSWRTVFR…ANVKVASSLA (66 aa)). Glutathione-binding positions include 288–292 (RTVFR) and 351–354 (NSGQ). A helical transmembrane segment spans residues 349-367 (FLNSGQAIIFSTALTLMMY). Topologically, residues 368 to 382 (MGCRGIVTSNLTVGD) are mitochondrial intermembrane. A helical transmembrane segment spans residues 383–404 (LVMINQLVFQLSIPLNFLGSVY). Position 401 (Gly-401) interacts with glutathione. Topologically, residues 405-693 (REMRQAFTDM…FGESNKSGDA (289 aa)) are mitochondrial matrix. Residues 443–679 (IQFDNVHFSY…NSVYTSMWHS (237 aa)) form the ABC transporter domain. ATP is bound by residues Tyr-452 and 476-487 (GASGCGKSTILR).

It belongs to the ABC transporter superfamily. ABCB family. Heavy Metal importer (TC 3.A.1.210) subfamily. In terms of assembly, homodimer.

It localises to the mitochondrion inner membrane. Its function is as follows. Performs an essential function in the generation of cytoplasmic iron-sulfur proteins by mediating the ATP-dependent export of Fe/S cluster precursors synthesized by nfs1 and other mitochondrial proteins. Hydrolyzes ATP. Binds glutathione and may function by transporting a glutathione-conjugated iron-sulfur compound. This chain is Iron-sulfur clusters transporter atm1, mitochondrial, found in Schizosaccharomyces pombe (strain 972 / ATCC 24843) (Fission yeast).